Here is a 316-residue protein sequence, read N- to C-terminus: Leucine-rich repeat-containing protein 73 (316 aa).

LRR repeat units lie at residues 57–78 (SLAQLNLNLGVVSSPSRIKQLA), 86–106 (SIQSLFLHGSPLTDAGLALLN), 114–137 (ALVALDLGDCMLGDEAINLICGLL), 145–166 (GLKELTLSANPGITPKGWSRLA), 174–187 (QVRVLNLDYNPLGD), 202–223 (TLEVLDLEGTGLTNQSAQTLLD), and 231–250 (ALRSLVLAENSISPELQQQI). The tract at residues 257–296 (GEEEEEMAGGAADTQEWGRGREPAAHQRGGSSWKCPSDPN) is disordered. The span at 272 to 281 (EWGRGREPAA) shows a compositional bias: basic and acidic residues.

The polypeptide is Leucine-rich repeat-containing protein 73 (Lrrc73) (Rattus norvegicus (Rat)).